The chain runs to 44 residues: MKRTLGGTSRKRKRTSGFRARMRTPDGRNVIRARRKKGRHRLSV.

Composition is skewed to basic residues over residues 1–22 (MKRT…RARM) and 31–44 (IRAR…RLSV). The disordered stretch occupies residues 1 to 44 (MKRTLGGTSRKRKRTSGFRARMRTPDGRNVIRARRKKGRHRLSV).

Belongs to the bacterial ribosomal protein bL34 family.

This chain is Large ribosomal subunit protein bL34, found in Nostoc punctiforme (strain ATCC 29133 / PCC 73102).